The chain runs to 59 residues: Large ribosomal subunit protein uL30 (59 aa).

Belongs to the universal ribosomal protein uL30 family. In terms of assembly, part of the 50S ribosomal subunit.

In Leptospira interrogans serogroup Icterohaemorrhagiae serovar copenhageni (strain Fiocruz L1-130), this protein is Large ribosomal subunit protein uL30.